Consider the following 60-residue polypeptide: Adenylate kinase isoenzyme 1 (60 aa).

G9–T14 is a binding site for ATP. S25 carries the post-translational modification Phosphoserine. The interval S25–K53 is NMP. Positions 26 and 31 each coordinate AMP.

Belongs to the adenylate kinase family. AK1 subfamily. In terms of assembly, monomer. The cofactor is Mg(2+).

It is found in the cytoplasm. The catalysed reaction is a ribonucleoside 5'-phosphate + ATP = a ribonucleoside 5'-diphosphate + ADP. The enzyme catalyses AMP + ATP = 2 ADP. It catalyses the reaction dAMP + ATP = dADP + ADP. It carries out the reaction dATP + AMP = dADP + ADP. The catalysed reaction is dAMP + dATP = 2 dADP. The enzyme catalyses a 2'-deoxyribonucleoside 5'-diphosphate + ATP = a 2'-deoxyribonucleoside 5'-triphosphate + ADP. It catalyses the reaction a ribonucleoside 5'-diphosphate + ATP = a ribonucleoside 5'-triphosphate + ADP. It carries out the reaction CDP + GTP = CTP + GDP. The catalysed reaction is GDP + ATP = GTP + ADP. The enzyme catalyses UDP + ATP = UTP + ADP. It catalyses the reaction GTP + UDP = UTP + GDP. It carries out the reaction dTDP + GTP = dTTP + GDP. The catalysed reaction is dCDP + GTP = dCTP + GDP. The enzyme catalyses dGDP + ATP = dGTP + ADP. It catalyses the reaction dADP + GTP = dATP + GDP. It carries out the reaction thiamine diphosphate + ADP = thiamine triphosphate + AMP. In terms of biological role, catalyzes the reversible transfer of the terminal phosphate group between ATP and AMP. Also displays broad nucleoside diphosphate kinase activity. Plays an important role in cellular energy homeostasis and in adenine nucleotide metabolism. Also catalyzes at a very low rate the synthesis of thiamine triphosphate (ThTP) from thiamine diphosphate (ThDP) and ADP. This chain is Adenylate kinase isoenzyme 1 (Ak1), found in Mesocricetus auratus (Golden hamster).